A 170-amino-acid chain; its full sequence is Urease accessory protein UreE (170 aa).

Positions 144–170 (GGHSHDDHDHHHGHHEHDHEHHHHHHD) are disordered. Basic and acidic residues predominate over residues 146–162 (HSHDDHDHHHGHHEHDH).

Belongs to the UreE family.

The protein localises to the cytoplasm. Involved in urease metallocenter assembly. Binds nickel. Probably functions as a nickel donor during metallocenter assembly. The chain is Urease accessory protein UreE from Brucella anthropi (strain ATCC 49188 / DSM 6882 / CCUG 24695 / JCM 21032 / LMG 3331 / NBRC 15819 / NCTC 12168 / Alc 37) (Ochrobactrum anthropi).